The chain runs to 479 residues: Aspartyl/glutamyl-tRNA(Asn/Gln) amidotransferase subunit B (479 aa).

It belongs to the GatB/GatE family. GatB subfamily. In terms of assembly, heterotrimer of A, B and C subunits.

The enzyme catalyses L-glutamyl-tRNA(Gln) + L-glutamine + ATP + H2O = L-glutaminyl-tRNA(Gln) + L-glutamate + ADP + phosphate + H(+). The catalysed reaction is L-aspartyl-tRNA(Asn) + L-glutamine + ATP + H2O = L-asparaginyl-tRNA(Asn) + L-glutamate + ADP + phosphate + 2 H(+). Allows the formation of correctly charged Asn-tRNA(Asn) or Gln-tRNA(Gln) through the transamidation of misacylated Asp-tRNA(Asn) or Glu-tRNA(Gln) in organisms which lack either or both of asparaginyl-tRNA or glutaminyl-tRNA synthetases. The reaction takes place in the presence of glutamine and ATP through an activated phospho-Asp-tRNA(Asn) or phospho-Glu-tRNA(Gln). The chain is Aspartyl/glutamyl-tRNA(Asn/Gln) amidotransferase subunit B from Streptococcus pyogenes serotype M1.